The following is a 73-amino-acid chain: Nodulin-1 (73 aa).

An N-terminal signal peptide occupies residues 1–23; it reads MERKTLASLCFFLIVLLAAQVVA. Intrachain disulfides connect Cys39-Cys64, Cys49-Cys71, and Cys53-Cys73.

As to expression, expressed in nodules, but not in leaves, stems, flowers and roots. In developing nodules, expressed close to the infection threads.

Its subcellular location is the secreted. Its function is as follows. Nodulation-related protein probably involved in the infection process. In Medicago truncatula (Barrel medic), this protein is Nodulin-1 (N1).